We begin with the raw amino-acid sequence, 465 residues long: Lactaldehyde dehydrogenase (465 aa).

220–225 (GSVEVG) contributes to the NAD(+) binding site. Active-site residues include E240 and C274.

The protein belongs to the aldehyde dehydrogenase family. In terms of assembly, homotetramer.

It carries out the reaction (S)-lactaldehyde + NAD(+) + H2O = (S)-lactate + NADH + 2 H(+). It functions in the pathway cofactor biosynthesis; coenzyme F420 biosynthesis. Its function is as follows. Involved in F420 biosynthesis through the oxidation of lactaldehyde to lactate. The protein is Lactaldehyde dehydrogenase of Methanococcus vannielii (strain ATCC 35089 / DSM 1224 / JCM 13029 / OCM 148 / SB).